A 232-amino-acid polypeptide reads, in one-letter code: Large ribosomal subunit protein uL1 (232 aa).

This sequence belongs to the universal ribosomal protein uL1 family. Part of the 50S ribosomal subunit.

Binds directly to 23S rRNA. The L1 stalk is quite mobile in the ribosome, and is involved in E site tRNA release. Its function is as follows. Protein L1 is also a translational repressor protein, it controls the translation of the L11 operon by binding to its mRNA. This is Large ribosomal subunit protein uL1 from Marinobacter nauticus (strain ATCC 700491 / DSM 11845 / VT8) (Marinobacter aquaeolei).